A 651-amino-acid chain; its full sequence is LysM domain receptor-like kinase 3 (651 aa).

Residues 1-19 (MNLTFYIFFLSLLPSFSSS) form the signal peptide. 8 N-linked (GlcNAc...) asparagine glycosylation sites follow: N2, N23, N42, N73, N86, N100, N114, and N177. The Extracellular portion of the chain corresponds to 20–236 (KPMNCSDTTR…TAKSGSHVPY (217 aa)). Intrachain disulfides connect C24/C76, C31/C133, and C74/C131. Residues 142–186 (MSYVAMAGDSVQSLSSRFGVSMDRIEDVNGILNLDNITAGDLLYI) enclose the LysM domain. Residues 196–216 (YETSKINPPAPSPAPASSLAN) are disordered. N-linked (GlcNAc...) asparagine glycosylation is found at N218 and N225. A helical membrane pass occupies residues 237–257 (IWIVGGLGVVLALLVLCILVC). Over 258 to 651 (ICLRSSSCSS…QVFSGLVQGR (394 aa)) the chain is Cytoplasmic. At T330 the chain carries Phosphothreonine. Residues 341 to 628 (FSDSNLLGHG…VVISLSQILL (288 aa)) form the Protein kinase domain. ATP contacts are provided by residues 347 to 355 (LGHGNYGSV) and K368. Phosphotyrosine is present on Y410. Catalysis depends on D464, which acts as the Proton acceptor. Residue S468 is modified to Phosphoserine. A phosphothreonine mark is found at T500 and T505. Y513 is subject to Phosphotyrosine.

Belongs to the protein kinase superfamily. Ser/Thr protein kinase family.

The protein localises to the cell membrane. Putative Lysin motif (LysM) receptor kinase that may recognize microbe-derived N-acetylglucosamine (NAG)-containing ligands. The sequence is that of LysM domain receptor-like kinase 3 (LYK3) from Arabidopsis thaliana (Mouse-ear cress).